Reading from the N-terminus, the 582-residue chain is Urocanate reductase (582 aa).

The N-terminal stretch at 1-20 (MHYKKSIIGIAVTATAIIAG) is a signal peptide. The N-palmitoyl cysteine moiety is linked to residue cysteine 21. A lipid anchor (S-diacylglycerol cysteine) is attached at cysteine 21. Threonine 93 bears the FMN phosphoryl threonine mark. The FAD site is built by alanine 143, glutamate 162, asparagine 170, serine 171, glycine 175, alanine 176, alanine 285, and aspartate 352. The active-site Proton donor is arginine 411. Positions 521, 550, and 565 each coordinate FAD.

It belongs to the FAD-dependent oxidoreductase 2 family. FRD/SDH subfamily. FAD serves as cofactor. It depends on FMN as a cofactor.

Its subcellular location is the cell membrane. It carries out the reaction dihydrourocanate + A = urocanate + AH2. Its function is as follows. Catalyzes the two-electron reduction of urocanate to dihydrourocanate (also named imidazole propionate or deamino-histidine). The physiological electron donor is unknown; it might be the membrane-bound tetraheme cytochrome c (CymA). Enables anaerobic growth with urocanate as a sole terminal electron acceptor, and thus can provide the cells with a niche where no other bacteria can compete and survive. Is unable to reduce cinnamate and other unsaturated organic acids such as acrylic, crotonic, fumaric and orotic acids. Has no fumarate reductase or succinate dehydrogenase activity. This Shewanella oneidensis (strain ATCC 700550 / JCM 31522 / CIP 106686 / LMG 19005 / NCIMB 14063 / MR-1) protein is Urocanate reductase (urdA).